We begin with the raw amino-acid sequence, 72 residues long: MGCAPGGPCCGPCGPCCGPCCGPCCGPCCGPCCGPCGPCCGPCGPRCGPCGPCGPCCGTMEKRNGLQRCCPF.

It belongs to the MST(3)CGP family. Testis.

The chain is Male-specific sperm protein Mst84Dd (Mst84Dd) from Drosophila melanogaster (Fruit fly).